The following is a 412-amino-acid chain: MQAKLIERLMTYAKIDTQSDFTSTTTPSTAKQWDLIRHLEKELKELGLTDVETDEYGYLFATLPSNVDYDVPTIGFLAHVDTATDFTGTNVSPQLVEHYEGGDIVLNESLNVVLSPKDFPELDGYVGHTLMTTDGTTLLGADDKAGIAEIVTAIEYLLAHPEIPHGPVRIAFTPDEEIGRGPHKFDVARFNADFAYTMDGGPLGELQYESFNAAGATVTFHGTNVHPGSAKNKMVNSMKLAMAFQNRLPADEAPERTSNYEGFFHLNGFNGDVEKTTLQYIIRDHDKQKFEARKALMEKLVLEWKQKYGEERIELQMEDQYYNMAEKIEPVKHIVDTVADVMRGLGIEPKIEPIRGGTDGSQLSYMGLPTPNIFTGGENYHGKFEYVSVNNMEKATTVIIETLRTFAKRAQA.

Position 79 (His79) interacts with Zn(2+). The active site involves Asp81. Asp142 is a Zn(2+) binding site. Catalysis depends on Glu176, which acts as the Proton acceptor. 3 residues coordinate Zn(2+): Glu177, Asp199, and His381.

This sequence belongs to the peptidase M20B family. Zn(2+) is required as a cofactor.

The protein resides in the cytoplasm. It carries out the reaction Release of the N-terminal residue from a tripeptide.. In terms of biological role, cleaves the N-terminal amino acid of tripeptides. The polypeptide is Peptidase T (Exiguobacterium sp. (strain ATCC BAA-1283 / AT1b)).